Here is a 464-residue protein sequence, read N- to C-terminus: Argininosuccinate lyase (464 aa).

It belongs to the lyase 1 family. Argininosuccinate lyase subfamily.

The protein resides in the cytoplasm. The catalysed reaction is 2-(N(omega)-L-arginino)succinate = fumarate + L-arginine. It participates in amino-acid biosynthesis; L-arginine biosynthesis; L-arginine from L-ornithine and carbamoyl phosphate: step 3/3. This is Argininosuccinate lyase from Janthinobacterium sp. (strain Marseille) (Minibacterium massiliensis).